The sequence spans 288 residues: Protoheme IX farnesyltransferase (288 aa).

The next 9 helical transmembrane spans lie at 16-36 (VWSLLVFVGVIGAIVAINRFT), 37-57 (LTNILLILIATVSITLGSMGA), 88-108 (VKGLYFGLILMFLSIIILLFF), 111-131 (YLAAVFMAIGLFDNVFIYSYL), 138-158 (WNIILGGFSGGFPVVIGWYTV), 162-182 (FSVLPWFLFALVVIWIPIHVW), 210-230 (AICISSSAVILFIFSIIPVFF), 236-256 (TYMIVATIIAIPMLVYSVLFV), and 265-285 (LKLFIYSSPYLAIIFVLVLIF).

This sequence belongs to the UbiA prenyltransferase family. Protoheme IX farnesyltransferase subfamily.

Its subcellular location is the cell membrane. The catalysed reaction is heme b + (2E,6E)-farnesyl diphosphate + H2O = Fe(II)-heme o + diphosphate. Its pathway is porphyrin-containing compound metabolism; heme O biosynthesis; heme O from protoheme: step 1/1. Functionally, converts heme B (protoheme IX) to heme O by substitution of the vinyl group on carbon 2 of heme B porphyrin ring with a hydroxyethyl farnesyl side group. This chain is Protoheme IX farnesyltransferase, found in Thermoplasma volcanium (strain ATCC 51530 / DSM 4299 / JCM 9571 / NBRC 15438 / GSS1).